We begin with the raw amino-acid sequence, 293 residues long: Pantothenate synthetase (293 aa).

30–37 contacts ATP; it reads MGNLHEGH. His-37 (proton donor) is an active-site residue. Gln-61 is a binding site for (R)-pantoate. Gln-61 serves as a coordination point for beta-alanine. Position 149-152 (149-152) interacts with ATP; it reads GEKD. Residue Gln-155 coordinates (R)-pantoate. ATP contacts are provided by residues Val-178 and 186 to 189; that span reads MSSR.

It belongs to the pantothenate synthetase family. In terms of assembly, homodimer.

The protein resides in the cytoplasm. The catalysed reaction is (R)-pantoate + beta-alanine + ATP = (R)-pantothenate + AMP + diphosphate + H(+). Its pathway is cofactor biosynthesis; (R)-pantothenate biosynthesis; (R)-pantothenate from (R)-pantoate and beta-alanine: step 1/1. Its function is as follows. Catalyzes the condensation of pantoate with beta-alanine in an ATP-dependent reaction via a pantoyl-adenylate intermediate. The sequence is that of Pantothenate synthetase from Vibrio cholerae serotype O1 (strain ATCC 39541 / Classical Ogawa 395 / O395).